The primary structure comprises 537 residues: Probable sterol O-acyltransferase 1 (537 aa).

A run of 4 helical transmembrane segments spans residues 98–118 (FRGFYVLFWLSMAAWVLQLYA), 140–160 (FFVLFSSDFLMICLSFFSYGL), 174–194 (LGYTIQTLWQGFYMVLAVYWV), and 199–219 (FPIVQCVFFTLHCAVLIMKQF). N-linked (GlcNAc...) asparagine glycosylation occurs at N250. Transmembrane regions (helical) follow at residues 344–364 (FGLLALTLALVDWYFVPSAVA) and 384–404 (IMFPAIILYLIMFYLIFDCIL). An FYXDWWN motif motif is present at residues 418-424 (FYGAWWN). 2 helical membrane-spanning segments follow: residues 462–482 (AVLLTFLISALVHEFVMLLAT) and 517–537 (VFFWIGMFTGPSFLCILYIVF). H474 is a catalytic residue.

Belongs to the membrane-bound acyltransferase family. Sterol o-acyltransferase subfamily.

The protein resides in the endoplasmic reticulum membrane. In terms of biological role, sterol O-acyltransferase that catalyzes the formation of stery esters. In Schizosaccharomyces pombe (strain 972 / ATCC 24843) (Fission yeast), this protein is Probable sterol O-acyltransferase 1 (are1).